The sequence spans 733 residues: Polyribonucleotide nucleotidyltransferase (733 aa).

Positions 503 and 509 each coordinate Mg(2+). The KH domain occupies 570-629 (PRLTTIQIPVDAIGMVIGKGGETIRSITEETGAEINIDDDGTVTIACSSPEATKAAVETI). The region spanning 639 to 713 (GTIYMGKVRD…GKTKFALSIK (75 aa)) is the S1 motif domain.

Belongs to the polyribonucleotide nucleotidyltransferase family. It depends on Mg(2+) as a cofactor.

The protein resides in the cytoplasm. The catalysed reaction is RNA(n+1) + phosphate = RNA(n) + a ribonucleoside 5'-diphosphate. Its function is as follows. Involved in mRNA degradation. Catalyzes the phosphorolysis of single-stranded polyribonucleotides processively in the 3'- to 5'-direction. This is Polyribonucleotide nucleotidyltransferase from Chlorobaculum tepidum (strain ATCC 49652 / DSM 12025 / NBRC 103806 / TLS) (Chlorobium tepidum).